A 172-amino-acid polypeptide reads, in one-letter code: Large ribosomal subunit protein uL10 (172 aa).

The protein belongs to the universal ribosomal protein uL10 family. As to quaternary structure, part of the ribosomal stalk of the 50S ribosomal subunit. The N-terminus interacts with L11 and the large rRNA to form the base of the stalk. The C-terminus forms an elongated spine to which L12 dimers bind in a sequential fashion forming a multimeric L10(L12)X complex.

In terms of biological role, forms part of the ribosomal stalk, playing a central role in the interaction of the ribosome with GTP-bound translation factors. This chain is Large ribosomal subunit protein uL10 (rplJ), found in Liberibacter asiaticus (Citrus greening disease).